Reading from the N-terminus, the 58-residue chain is Small integral membrane protein 11 (58 aa).

A helical transmembrane segment spans residues 9 to 29 (FPLLLYILAAKTLILCLAFAG). The stretch at 29-58 (GVKVYQRKRLEAKQQKVEAEKRKQAEKKES) forms a coiled coil.

Its subcellular location is the membrane. In Bos taurus (Bovine), this protein is Small integral membrane protein 11 (SMIM11).